The chain runs to 643 residues: Hepatoma-derived growth factor-related protein 2 (643 aa).

In terms of domain architecture, PWWP spans 7–64 (PGDLVFAKMKGYPHWPARIDDVKDGAVKPPPNKYPIFFYGTHETAFLAPKDLFPYEKC). Disordered regions lie at residues 88 to 450 (PQAS…KKPE) and 548 to 643 (LESQ…NQTS). Residues 90 to 104 (ASYSLPPASVSSSDS) show a composition bias toward low complexity. Over residues 107-116 (PEEKSTARSD) the composition is skewed to basic and acidic residues. Residues 176–187 (SEEENSDSDQDF) are compositionally biased toward acidic residues. Positions 194–204 (PRIQRRTTNLG) are enriched in polar residues. Basic and acidic residues predominate over residues 209–231 (IFAESDSKSDESEDEKKEEEQKK). The segment covering 232 to 249 (SPSSSSASSPSLSSSDSE) has biased composition (low complexity). Basic and acidic residues-rich tracts occupy residues 290–353 (SVDR…DSSK), 373–382 (EDKKPVKEVK), and 417–450 (RPSE…KKPE). Residues 295-345 (SEWKKRDEERRRELEERRKKEQEEQLRRLREEEREEEERKKREKAEKGDKS) are a coiled coil. Over residues 549–559 (ESQQKTVQKVN) the composition is skewed to polar residues. 2 stretches are compositionally biased toward basic and acidic residues: residues 560-575 (TAEK…GKVE) and 608-622 (NKTE…HAEH).

This sequence belongs to the HDGF family.

It is found in the nucleus. The protein resides in the cytoplasm. Its function is as follows. May act as a regulator of myogenesis. Promotes the repair of DNA double-strand breaks (DSBs) through the homologous recombination pathway by facilitating the recruitment of the DNA endonuclease RBBP8 to the DSBs. The sequence is that of Hepatoma-derived growth factor-related protein 2 (hdgfl2) from Xenopus tropicalis (Western clawed frog).